Consider the following 489-residue polypeptide: MLDFMDYIQLAFSDASGWNRDNSYSTLTDTAKALLDFSTPERLRVHLSSLSTPQFATTYTLGTVGLIDGSVSYLFSTIPLDKTPSRSALISLRSLVPGYRQIYPPAVPLDLGLEWTLGSSGNTGAAEQALSNAYEDTGRSERKRKATLLHATLHLPPPTTLTALFLHRPSPTTKVSVALWSSQATNISKSASPQASILTQLFHDTGKYSTEFLFSTDNTLFGFRGLWNFGPDPRDSGGRNIATGNVKREKTSCPQSVALLSAGGEAYYSPTSSVIGLSTGVRFTTLPAAYDARSSSTSPPTLGGAGGSQIPSPISTFPYTLTLTLTPLTGSLSTTYSLLASPNLALSSRFGFNVYSWESEMVAGCELWRNRKKINLHNYNPDGSVDDLAWAKRKLGLLPPLESSDPASSSSSVSPTVSPVTSESVIKLRVDQSLRVRLLWEGRIKDLLVSAGVALGPTSAHTPSISCSGGSSSKGYSWTGVGVSVLYSS.

It belongs to the MDM10 family. As to quaternary structure, component of the ER-mitochondria encounter structure (ERMES) or MDM complex, composed of MMM1, MDM10, MDM12 and MDM34. Associates with the mitochondrial outer membrane sorting assembly machinery SAM(core) complex.

It is found in the mitochondrion outer membrane. Component of the ERMES/MDM complex, which serves as a molecular tether to connect the endoplasmic reticulum and mitochondria. Components of this complex are involved in the control of mitochondrial shape and protein biogenesis and may function in phospholipid exchange. MDM10 is involved in the late assembly steps of the general translocase of the mitochondrial outer membrane (TOM complex). Functions in the TOM40-specific route of the assembly of outer membrane beta-barrel proteins, including the association of TOM40 with the receptor TOM22 and small TOM proteins. Can associate with the SAM(core) complex as well as the MDM12-MMM1 complex, both involved in late steps of the major beta-barrel assembly pathway, that is responsible for biogenesis of all outer membrane beta-barrel proteins. May act as a switch that shuttles between both complexes and channels precursor proteins into the TOM40-specific pathway. Plays a role in mitochondrial morphology and in the inheritance of mitochondria. This is Mitochondrial distribution and morphology protein 10 from Arthroderma otae (strain ATCC MYA-4605 / CBS 113480) (Microsporum canis).